The following is a 405-amino-acid chain: Ubiquitin-like modifier-activating enzyme 5 (405 aa).

The tract at residues 1–44 (MATVEELQTRVKQLEEELERERTRNRGGTDGGGGRKKIDQMSSE) is disordered. Residues 7–24 (LQTRVKQLEEELERERTR) are compositionally biased toward basic and acidic residues. Residues G81, D102, K125, N148, and N182 each coordinate ATP. Zn(2+) contacts are provided by C224 and C227. Residue C248 is the Glycyl thioester intermediate of the active site. Zn(2+) is bound by residues C301 and C306. The interval 346–377 (AETTEEELKAASHGHVPELVEGVHVAYVRPMT) is linker. The UFC1-binding sequence (UFC) signature appears at 390 to 405 (DDQESLEDLMAKMKSI).

The protein belongs to the ubiquitin-activating E1 family. UBA5 subfamily. Homodimer; homodimerization is required for UFM1 activation. Interacts (via UIS motif) with UFM1; binds UFM1 via a trans-binding mechanism in which UFM1 interacts with distinct sites in both subunits of the UBA5 homodimer. Interacts (via C-terminus) with UFC1.

It is found in the cytoplasm. It localises to the nucleus. The protein resides in the endoplasmic reticulum membrane. The protein localises to the golgi apparatus. Its function is as follows. E1-like enzyme which specifically catalyzes the first step in ufmylation. Activates UFM1 by first adenylating its C-terminal glycine residue with ATP, and thereafter linking this residue to the side chain of a cysteine residue in E1, yielding a UFM1-E1 thioester and free AMP. Activates UFM1 via a trans-binding mechanism, in which UFM1 interacts with distinct sites in both subunits of the UBA5 homodimer. Trans-binding also promotes stabilization of the UBA5 homodimer, and enhances ATP-binding. Transfer of UFM1 from UBA5 to the E2-like enzyme UFC1 also takes place using a trans mechanism. The protein is Ubiquitin-like modifier-activating enzyme 5 of Branchiostoma floridae (Florida lancelet).